The chain runs to 367 residues: Aflatoxin B1 aldehyde reductase member 2 (367 aa).

The N-terminal 46 residues, 1–46 (MLRAVSRAVSRAAVRCAWRSGPSVARPLAMSRSPAPRAVSGAPLRP), are a transit peptide targeting the mitochondrion. The segment at 27–46 (PLAMSRSPAPRAVSGAPLRP) is disordered. Position 40 is a phosphoserine (Ser40). Thr48 is modified (phosphothreonine). An NADP(+)-binding site is contributed by Asp80. The active-site Proton donor is the Tyr85. Lys136 bears the N6-acetyllysine mark. His149 is a substrate binding site. NADP(+)-binding positions include 179–180 (SN), Gln205, 234–244 (NPLAGGLLTGK), and Arg258. Lys244 is modified (N6-succinyllysine). A Phosphoserine modification is found at Ser263. Substrate is bound by residues Tyr268 and Arg271. Residue 326 to 334 (SSLEQLEQN) coordinates NADP(+). Arg367 is a binding site for substrate.

Belongs to the aldo/keto reductase family. Aldo/keto reductase 2 subfamily. Homodimer. Heterodimer with AKR7A1.

Its subcellular location is the mitochondrion. The protein localises to the golgi apparatus. The protein resides in the golgi stack. It localises to the cytoplasm. The catalysed reaction is 4-hydroxybutanoate + NADP(+) = succinate semialdehyde + NADPH + H(+). Catalyzes the NADPH-dependent reduction of succinic semialdehyde to gamma-hydroxybutyrate. May have an important role in producing the neuromodulator gamma-hydroxybutyrate (GHB). Has broad substrate specificity. Can reduce the dialdehyde protein-binding form of aflatoxin B1 (AFB1) to the non-binding AFB1 dialcohol. Acts as a 2-carboxybenzaldehyde reductase. The protein is Aflatoxin B1 aldehyde reductase member 2 (Akr7a2) of Rattus norvegicus (Rat).